Reading from the N-terminus, the 375-residue chain is uncharacterized protein (375 aa).

Residues 1 to 12 (MAGNKKQVKKNT) are compositionally biased toward basic residues. 2 disordered regions span residues 1–76 (MAGN…EKKS) and 119–274 (KNKN…KEIK). The span at 26-39 (DTSNLDTAVQTSAS) shows a compositional bias: polar residues. The segment covering 129–141 (TATDGTTTTTNIP) has biased composition (low complexity). The span at 175–185 (DETHSHKEEPK) shows a compositional bias: basic and acidic residues. 2 stretches are compositionally biased toward low complexity: residues 198–212 (SKQQ…SSSS) and 225–241 (PTPT…KSTP). The segment covering 256–274 (EQPKEKSSPAPVKKEKEIK) has biased composition (basic and acidic residues). 2 helical membrane-spanning segments follow: residues 299–319 (VVYK…LVPL) and 327–347 (IYSY…TLFI). Residues 355–375 (ASKEQKSKSGNKKSTTRKVKA) form a disordered region. The segment covering 363-375 (SGNKKSTTRKVKA) has biased composition (basic residues).

It is found in the membrane. This is an uncharacterized protein from Dictyostelium discoideum (Social amoeba).